Consider the following 278-residue polypeptide: Ribosomal RNA small subunit methyltransferase A (278 aa).

N18, L20, G45, E66, D89, and N110 together coordinate S-adenosyl-L-methionine.

This sequence belongs to the class I-like SAM-binding methyltransferase superfamily. rRNA adenine N(6)-methyltransferase family. RsmA subfamily.

The protein localises to the cytoplasm. The catalysed reaction is adenosine(1518)/adenosine(1519) in 16S rRNA + 4 S-adenosyl-L-methionine = N(6)-dimethyladenosine(1518)/N(6)-dimethyladenosine(1519) in 16S rRNA + 4 S-adenosyl-L-homocysteine + 4 H(+). Functionally, specifically dimethylates two adjacent adenosines (A1518 and A1519) in the loop of a conserved hairpin near the 3'-end of 16S rRNA in the 30S particle. May play a critical role in biogenesis of 30S subunits. The protein is Ribosomal RNA small subunit methyltransferase A of Cupriavidus pinatubonensis (strain JMP 134 / LMG 1197) (Cupriavidus necator (strain JMP 134)).